The primary structure comprises 496 residues: Zinc finger and SCAN domain-containing protein 5C (496 aa).

Polar residues predominate over residues 1–19 (MAANCTSSWSLGESCNSPG). The interval 1-38 (MAANCTSSWSLGESCNSPGSEPPQSMPSPATQLGNHDS) is disordered. Residues 44–126 (HVNFRMFSCP…DLLRNNRRPK (83 aa)) form the SCAN box domain. Disordered stretches follow at residues 149-188 (EAPASVRDDPRHVSSQRTSSVNQMCPEEGQASQELQTLPR) and 203-347 (PETT…HPSG). The span at 161 to 171 (VSSQRTSSVNQ) shows a compositional bias: polar residues. Residues 210–223 (GDPKALRPKPTLEK) show a composition bias toward basic and acidic residues. The segment covering 234–247 (GLTSPEPQLPNSPT) has biased composition (polar residues). Positions 253–263 (KEGKEPQKRAS) are enriched in basic and acidic residues. 5 consecutive C2H2-type zinc fingers follow at residues 356–378 (FACEVCGKRFKYRGKLAVHTRSH), 384–406 (FQCNLCGKRFMQRIGLQFHQRTH), 412–434 (YTCDICQKQFTQKSYLKCHKRSH), 440–462 (FECKDCKKVFTYKANLKEHQRIH), and 468–490 (HKCSKCPRAFGRPATLRRHQKTH).

Its subcellular location is the nucleus. Functionally, may be involved in transcriptional regulation. The chain is Zinc finger and SCAN domain-containing protein 5C from Homo sapiens (Human).